We begin with the raw amino-acid sequence, 314 residues long: tRNA dimethylallyltransferase (314 aa).

Glycine 13 to threonine 20 provides a ligand contact to ATP. Residue threonine 15–threonine 20 participates in substrate binding. Positions aspartate 38–glutamine 41 are interaction with substrate tRNA.

Belongs to the IPP transferase family. In terms of assembly, monomer. Mg(2+) is required as a cofactor.

The enzyme catalyses adenosine(37) in tRNA + dimethylallyl diphosphate = N(6)-dimethylallyladenosine(37) in tRNA + diphosphate. Its function is as follows. Catalyzes the transfer of a dimethylallyl group onto the adenine at position 37 in tRNAs that read codons beginning with uridine, leading to the formation of N6-(dimethylallyl)adenosine (i(6)A). The protein is tRNA dimethylallyltransferase of Bacillus licheniformis (strain ATCC 14580 / DSM 13 / JCM 2505 / CCUG 7422 / NBRC 12200 / NCIMB 9375 / NCTC 10341 / NRRL NRS-1264 / Gibson 46).